A 398-amino-acid polypeptide reads, in one-letter code: Tryptophan synthase beta chain (398 aa).

K89 is modified (N6-(pyridoxal phosphate)lysine).

It belongs to the TrpB family. As to quaternary structure, tetramer of two alpha and two beta chains. It depends on pyridoxal 5'-phosphate as a cofactor.

The enzyme catalyses (1S,2R)-1-C-(indol-3-yl)glycerol 3-phosphate + L-serine = D-glyceraldehyde 3-phosphate + L-tryptophan + H2O. Its pathway is amino-acid biosynthesis; L-tryptophan biosynthesis; L-tryptophan from chorismate: step 5/5. In terms of biological role, the beta subunit is responsible for the synthesis of L-tryptophan from indole and L-serine. This chain is Tryptophan synthase beta chain, found in Methanopyrus kandleri (strain AV19 / DSM 6324 / JCM 9639 / NBRC 100938).